The sequence spans 198 residues: Recombination protein RecR (198 aa).

A C4-type zinc finger spans residues 57-72 (CSICGNLTDQDPCAIC). Positions 80 to 175 (STILIVEDSR…KVTRLARGLA (96 aa)) constitute a Toprim domain.

It belongs to the RecR family.

Functionally, may play a role in DNA repair. It seems to be involved in an RecBC-independent recombinational process of DNA repair. It may act with RecF and RecO. This is Recombination protein RecR from Streptococcus suis (strain 05ZYH33).